The following is a 296-amino-acid chain: 4-diphosphocytidyl-2-C-methyl-D-erythritol kinase (296 aa).

The active site involves Lys12. An ATP-binding site is contributed by 94 to 104 (PAQAGMGGGSS). The active site involves Asp136.

Belongs to the GHMP kinase family. IspE subfamily.

The catalysed reaction is 4-CDP-2-C-methyl-D-erythritol + ATP = 4-CDP-2-C-methyl-D-erythritol 2-phosphate + ADP + H(+). Its pathway is isoprenoid biosynthesis; isopentenyl diphosphate biosynthesis via DXP pathway; isopentenyl diphosphate from 1-deoxy-D-xylulose 5-phosphate: step 3/6. Its function is as follows. Catalyzes the phosphorylation of the position 2 hydroxy group of 4-diphosphocytidyl-2C-methyl-D-erythritol. In Variovorax paradoxus (strain S110), this protein is 4-diphosphocytidyl-2-C-methyl-D-erythritol kinase.